A 164-amino-acid chain; its full sequence is ATP synthase subunit b (164 aa).

Residues Ile-8–Phe-28 form a helical membrane-spanning segment.

The protein belongs to the ATPase B chain family. F-type ATPases have 2 components, F(1) - the catalytic core - and F(0) - the membrane proton channel. F(1) has five subunits: alpha(3), beta(3), gamma(1), delta(1), epsilon(1). F(0) has three main subunits: a(1), b(2) and c(10-14). The alpha and beta chains form an alternating ring which encloses part of the gamma chain. F(1) is attached to F(0) by a central stalk formed by the gamma and epsilon chains, while a peripheral stalk is formed by the delta and b chains.

It is found in the cell membrane. F(1)F(0) ATP synthase produces ATP from ADP in the presence of a proton or sodium gradient. F-type ATPases consist of two structural domains, F(1) containing the extramembraneous catalytic core and F(0) containing the membrane proton channel, linked together by a central stalk and a peripheral stalk. During catalysis, ATP synthesis in the catalytic domain of F(1) is coupled via a rotary mechanism of the central stalk subunits to proton translocation. Functionally, component of the F(0) channel, it forms part of the peripheral stalk, linking F(1) to F(0). The sequence is that of ATP synthase subunit b from Christiangramia forsetii (strain DSM 17595 / CGMCC 1.15422 / KT0803) (Gramella forsetii).